The following is a 683-amino-acid chain: Kinesin-like protein KIF2B (683 aa).

The residue at position 125 (Thr125) is a Phosphothreonine; by PLK1. The stretch at 141 to 176 forms a coiled coil; the sequence is LMTQRKSACLREIEKLQKQRERRRRLHREIRAQRAR. Residue Ser204 is modified to Phosphoserine; by PLK1. One can recognise a Kinesin motor domain in the interval 213-543; it reads RICVCVRKRP…LRYANRVKEI (331 aa). 303 to 310 lines the ATP pocket; it reads GQTGSGKT. A coiled-coil region spans residues 640-672; it reads QLLSILEKKIDILTEIRRKLKLLQADIQKENRH.

The protein belongs to the TRAFAC class myosin-kinesin ATPase superfamily. Kinesin family. MCAK/KIF2 subfamily. Post-translationally, phosphorylation at Thr-125 by PLK1 is required for activity in the correction of kinetochore-microtubules attachment errors, while phosphorylation at Ser-204 also by PLK1 is required for the kinetochore localization and activity in prometaphase.

The protein resides in the cytoplasm. It is found in the cytoskeleton. The protein localises to the microtubule organizing center. Its subcellular location is the centrosome. It localises to the spindle. The protein resides in the chromosome. It is found in the centromere. The protein localises to the kinetochore. Functionally, plus end-directed microtubule-dependent motor required for spindle assembly and chromosome movement during mitosis. Has microtubule depolymerization activity. Plays a role in chromosome congression. The polypeptide is Kinesin-like protein KIF2B (Bos taurus (Bovine)).